The sequence spans 651 residues: Peptide-N(4)-(N-acetyl-beta-glucosaminyl)asparagine amidase (651 aa).

Ala2 is modified (N-acetylalanine). The PUB domain maps to 30–91 (EASKLLLTYA…EGETHLIFPK (62 aa)). The segment at 116–153 (SSQKVEFSQHPAAVRLPAEQPEDPTGLMQHSGNQPGQP) is disordered. Residues 143 to 152 (MQHSGNQPGQ) show a composition bias toward polar residues. Zn(2+) contacts are provided by Cys247, Cys250, Cys280, and Cys283. Cys306 serves as the catalytic Nucleophile. Catalysis depends on residues His333 and Asp350. The PAW domain maps to 451-651 (ELGGRVSGSL…LEIIITFSDL (201 aa)).

It belongs to the transglutaminase-like superfamily. PNGase family. As to quaternary structure, component of a complex required to couple retrotranslocation, ubiquitination and deglycosylation composed of NGLY1, SAKS1, AMFR, VCP and RAD23B. Interacts with the proteasome components RAD23B and PSMC1. Interacts with directly with VCP. Interacts with DERL1, bringing it close to the endoplasmic reticulum membrane. Interacts with SAKS1. Zn(2+) serves as cofactor.

The protein resides in the cytoplasm. It carries out the reaction Hydrolysis of an N(4)-(acetyl-beta-D-glucosaminyl)asparagine residue in which the glucosamine residue may be further glycosylated, to yield a (substituted) N-acetyl-beta-D-glucosaminylamine and a peptide containing an aspartate residue.. With respect to regulation, inhibited by Z-VAD-fmk, a well-known caspase inhibitor, which inhibits enzyme activity through covalent binding of the carbohydrate to the single Cys-306 residue. In terms of biological role, specifically deglycosylates the denatured form of N-linked glycoproteins in the cytoplasm and assists their proteasome-mediated degradation. Cleaves the beta-aspartyl-glucosamine (GlcNAc) of the glycan and the amide side chain of Asn, converting Asn to Asp. Prefers proteins containing high-mannose over those bearing complex type oligosaccharides. Can recognize misfolded proteins in the endoplasmic reticulum that are exported to the cytosol to be destroyed and deglycosylate them, while it has no activity toward native proteins. Deglycosylation is a prerequisite for subsequent proteasome-mediated degradation of some, but not all, misfolded glycoproteins. In Rattus norvegicus (Rat), this protein is Peptide-N(4)-(N-acetyl-beta-glucosaminyl)asparagine amidase (Ngly1).